The sequence spans 157 residues: Dihydrofolate reductase type 15 (157 aa).

The DHFR domain maps to K2 to K156.

This sequence belongs to the dihydrofolate reductase family. In terms of assembly, homodimer.

The enzyme catalyses (6S)-5,6,7,8-tetrahydrofolate + NADP(+) = 7,8-dihydrofolate + NADPH + H(+). The protein operates within cofactor biosynthesis; tetrahydrofolate biosynthesis; 5,6,7,8-tetrahydrofolate from 7,8-dihydrofolate: step 1/1. Key enzyme in folate metabolism. Catalyzes an essential reaction for de novo glycine and purine synthesis, and for DNA precursor synthesis. In Escherichia coli, this protein is Dihydrofolate reductase type 15 (dhfrXV).